The following is a 371-amino-acid chain: Glycosyltransferase 8 domain-containing protein 1 (371 aa).

At 1–7 (MSFRKVN) the chain is on the cytoplasmic side. A helical; Signal-anchor for type II membrane protein membrane pass occupies residues 8-28 (IIIWVLAVVLFLLVLHHNFLS). Over 29–371 (LSSLLKNDIS…RRHMDTSNIK (343 aa)) the chain is Lumenal. An N-linked (GlcNAc...) asparagine glycan is attached at Asn-257.

It belongs to the glycosyltransferase 8 family.

It localises to the membrane. The protein is Glycosyltransferase 8 domain-containing protein 1 (Glt8d1) of Mus musculus (Mouse).